The chain runs to 243 residues: Homeobox protein nob-1 (243 aa).

Polar residues predominate over residues 1 to 12 (MISVMQQMINND). Disordered stretches follow at residues 1–23 (MISVMQQMINNDSPEDSKESITS) and 40–67 (SIQGESRSERESETGSSPQLAPSSTGMV). The homeobox DNA-binding region spans 162–221 (GKKKRQPYKKDQISRLEYEYSVNQYLTNKRRSELSAQLMLDEKQVKVWFQNRRMKDKKLR).

Belongs to the abd-b homeobox family. As to quaternary structure, interacts with nuclear receptor nhr-25. Interacts with geminin homolog gmn-1. Interacts with homeodomain protein ceh-20.

Its subcellular location is the nucleus. In terms of biological role, transcription factor, involved in posterior embryonic patterning, morphogenetic movements of the posterior hypodermis, and cell fate specification. Binds to the 5'-TAGT-3' motif in regulatory elements of genes, including Meis protein psa-3 and microRNA mir-57. Involved in a negative regulatory loop with mir-57 to specify posterior cell identities. Required for asymmetric division of the T hypodermal cell, acting via the regulation of asymmetric expression of psa-3 in cooperation with ceh-20 and the Wnt-MAPK pathway. Involved in the regulation of the onset of non-apoptotic cell death in the linker cell, acting together with the Wnt signaling pathway. Involved in promoting embryogenesis, in concert with orphan nuclear receptor nhr-25. May regulate expression of transcription factor dmd-3. The chain is Homeobox protein nob-1 from Caenorhabditis elegans.